Here is a 380-residue protein sequence, read N- to C-terminus: Putative 8-amino-7-oxononanoate synthase (380 aa).

Arg-18 contacts substrate. 105–106 (GY) is a binding site for pyridoxal 5'-phosphate. Substrate is bound at residue His-130. Pyridoxal 5'-phosphate-binding positions include Ser-178, 204 to 207 (DEAH), and 235 to 238 (TFGK). Lys-238 carries the N6-(pyridoxal phosphate)lysine modification. Thr-352 contributes to the substrate binding site.

It belongs to the class-II pyridoxal-phosphate-dependent aminotransferase family. BioF subfamily. In terms of assembly, homodimer. Pyridoxal 5'-phosphate serves as cofactor.

The catalysed reaction is 6-carboxyhexanoyl-[ACP] + L-alanine + H(+) = (8S)-8-amino-7-oxononanoate + holo-[ACP] + CO2. It participates in cofactor biosynthesis; biotin biosynthesis. In terms of biological role, catalyzes the decarboxylative condensation of pimeloyl-[acyl-carrier protein] and L-alanine to produce 8-amino-7-oxononanoate (AON), [acyl-carrier protein], and carbon dioxide. This chain is Putative 8-amino-7-oxononanoate synthase (bioF), found in Glaesserella parasuis serovar 5 (strain SH0165) (Haemophilus parasuis).